A 356-amino-acid chain; its full sequence is Sterol-4-alpha-carboxylate 3-dehydrogenase, decarboxylating (356 aa).

Met-1 is modified (N-acetylmethionine). Tyr-155 (proton acceptor) is an active-site residue. Lys-159 is a binding site for NAD(+). The helical transmembrane segment at 281-301 (WLAYYLALLVSLLVMVISPVI) threads the bilayer. The Prevents secretion from ER motif lies at 353-356 (RKVM).

The protein belongs to the 3-beta-HSD family. Homodimer.

Its subcellular location is the endoplasmic reticulum membrane. The protein resides in the lipid droplet. The catalysed reaction is a 3beta-hydroxysteroid-4alpha-carboxylate + NADP(+) = a 3-oxosteroid + CO2 + NADPH. It carries out the reaction a 3beta-hydroxysteroid-4alpha-carboxylate + NAD(+) = a 3-oxosteroid + CO2 + NADH. The enzyme catalyses 4alpha-carboxyzymosterol + NADP(+) = zymosterone + CO2 + NADPH. It catalyses the reaction 4alpha-carboxy-4beta-methyl-5alpha-cholest-8-en-3beta-ol + NADP(+) = 4alpha-methyl-5alpha-cholest-8-en-3-one + CO2 + NADPH. The catalysed reaction is 4alpha-carboxy-5alpha-cholest-8-ene-3beta-ol + NADP(+) = 5alpha-cholest-8-en-3-one + CO2 + NADPH. It carries out the reaction 4beta-methylzymosterol-4alpha-carboxylate + NADP(+) = 3-dehydro-4-methylzymosterol + CO2 + NADPH. The enzyme catalyses 4beta-methylzymosterol-4alpha-carboxylate + NAD(+) = 3-dehydro-4-methylzymosterol + CO2 + NADH. It catalyses the reaction 4alpha-carboxy-5alpha-cholest-8-ene-3beta-ol + NAD(+) = 5alpha-cholest-8-en-3-one + CO2 + NADH. The catalysed reaction is 4alpha-carboxy-4beta-methyl-5alpha-cholest-8-en-3beta-ol + NAD(+) = 4alpha-methyl-5alpha-cholest-8-en-3-one + CO2 + NADH. It carries out the reaction 4alpha-carboxyzymosterol + NAD(+) = zymosterone + CO2 + NADH. It functions in the pathway steroid biosynthesis; zymosterol biosynthesis; zymosterol from lanosterol: step 4/6. Its function is as follows. Catalyzes the NAD(P)(+)-dependent oxidative decarboxylation of the C4 methyl groups of 4-alpha-carboxysterols in post-squalene cholesterol biosynthesis. Also plays a role in the regulation of the endocytic trafficking of EGFR. This Bos taurus (Bovine) protein is Sterol-4-alpha-carboxylate 3-dehydrogenase, decarboxylating (NSDHL).